The chain runs to 434 residues: Xylose isomerase (434 aa).

Catalysis depends on residues His99 and Asp102. Mg(2+)-binding residues include Glu230, Glu266, His269, Asp294, Asp305, Asp307, and Asp337.

This sequence belongs to the xylose isomerase family. As to quaternary structure, homotetramer. Mg(2+) serves as cofactor.

The protein localises to the cytoplasm. It carries out the reaction alpha-D-xylose = alpha-D-xylulofuranose. The protein is Xylose isomerase of Dinoroseobacter shibae (strain DSM 16493 / NCIMB 14021 / DFL 12).